A 72-amino-acid chain; its full sequence is Peptide Ctri9194 (72 aa).

Positions 1-23 are cleaved as a signal peptide; the sequence is MKTQNVLLSFGIVFLMISFSSET. Ile38 is modified (isoleucine amide). Positions 42–72 are excised as a propeptide; the sequence is SLKDVESLDFLFDPTFTAADLAVLENALEDY.

It belongs to the non-disulfide-bridged peptide (NDBP) superfamily. Short antimicrobial peptide (group 4) family. Expressed by the venom gland.

The protein resides in the secreted. Functionally, antimicrobial peptide. The sequence is that of Peptide Ctri9194 from Chaerilus tricostatus (Scorpion).